A 331-amino-acid chain; its full sequence is Olfactory receptor 7D11 (331 aa).

Topologically, residues 1–25 are extracellular; sequence MEIENHTLITKFLILGLSDDPELQP. Asparagine 5 is a glycosylation site (N-linked (GlcNAc...) asparagine). Residues 26-46 traverse the membrane as a helical segment; sequence ILFGLFLSMYLVTLLGNLLII. The Cytoplasmic segment spans residues 47–57; the sequence is LAVSSDSHLHK. A helical transmembrane segment spans residues 58–78; sequence PMYFLLSNLSFIDICFISTTI. Topologically, residues 79–97 are extracellular; that stretch reads PKMLVNMQSQIKDISYIEC. Cysteines 97 and 179 form a disulfide. Residues 98-118 traverse the membrane as a helical segment; sequence LTQVFFFNIFAGMDNFLLTLM. The Cytoplasmic portion of the chain corresponds to 119-142; the sequence is AYDRFVAICHPLNYTVIMNPRLCA. Residues 143-163 form a helical membrane-spanning segment; it reads LLILMFWIIMFWVSLIHVLLM. Over 164–196 the chain is Extracellular; sequence NELNFSRGTEIPHFFCELAQVLKVSNSDNHVNN. The N-linked (GlcNAc...) asparagine glycan is linked to asparagine 167. The helical transmembrane segment at 197 to 217 threads the bilayer; the sequence is VFMYVVTSLLGVIPMTGILMS. Topologically, residues 218 to 244 are cytoplasmic; sequence YSQIFSSLFRMSSTVSKYKAFSTCGSH. The chain crosses the membrane as a helical span at residues 245–265; it reads LCVVTLFYGSGFGVYFSSSVV. Over 266-271 the chain is Extracellular; it reads HSTQRR. Residues 272–292 form a helical membrane-spanning segment; the sequence is KVASLMYTVISPMLNPFIYTL. Residues 293–331 lie on the Cytoplasmic side of the membrane; that stretch reads RNKDVKGALGKLFNRVASSPSCINDIRNKLLLRSVRQIL.

It belongs to the G-protein coupled receptor 1 family.

It localises to the cell membrane. Possible olfactory or taste receptor. This is Olfactory receptor 7D11 from Mus musculus (Mouse).